Consider the following 323-residue polypeptide: HPr kinase/phosphorylase (323 aa).

Residues His146 and Lys167 contribute to the active site. Residue 161 to 168 participates in ATP binding; sequence GESGLGKS. Ser168 contributes to the Mg(2+) binding site. Asp185 acts as the Proton acceptor; for phosphorylation activity. Proton donor; for dephosphorylation activity in catalysis. An important for the catalytic mechanism of both phosphorylation and dephosphorylation region spans residues 209-218; that stretch reads LEVRGLGLLD. Glu210 provides a ligand contact to Mg(2+). The active site involves Arg250. The tract at residues 271-276 is important for the catalytic mechanism of dephosphorylation; the sequence is QVAAGR.

The protein belongs to the HPrK/P family. In terms of assembly, homohexamer. Requires Mg(2+) as cofactor.

It catalyses the reaction [HPr protein]-L-serine + ATP = [HPr protein]-O-phospho-L-serine + ADP + H(+). The enzyme catalyses [HPr protein]-O-phospho-L-serine + phosphate + H(+) = [HPr protein]-L-serine + diphosphate. In terms of biological role, catalyzes the ATP- as well as the pyrophosphate-dependent phosphorylation of a specific serine residue in HPr, a phosphocarrier protein of the phosphoenolpyruvate-dependent sugar phosphotransferase system (PTS). HprK/P also catalyzes the pyrophosphate-producing, inorganic phosphate-dependent dephosphorylation (phosphorolysis) of seryl-phosphorylated HPr (P-Ser-HPr). This is HPr kinase/phosphorylase from Cupriavidus necator (strain ATCC 17699 / DSM 428 / KCTC 22496 / NCIMB 10442 / H16 / Stanier 337) (Ralstonia eutropha).